The following is a 332-amino-acid chain: Ornithine carbamoyltransferase, catabolic (332 aa).

Carbamoyl phosphate-binding positions include 60 to 63 (STRT), glutamine 87, arginine 111, and 138 to 141 (HPTQ). Residues asparagine 170, aspartate 230, and 234–235 (SM) each bind L-ornithine. Residues 271-272 (CL) and arginine 316 contribute to the carbamoyl phosphate site.

This sequence belongs to the aspartate/ornithine carbamoyltransferase superfamily. OTCase family.

It localises to the cytoplasm. The enzyme catalyses carbamoyl phosphate + L-ornithine = L-citrulline + phosphate + H(+). The protein operates within amino-acid degradation; L-arginine degradation via ADI pathway; carbamoyl phosphate from L-arginine: step 2/2. Reversibly catalyzes the transfer of the carbamoyl group from carbamoyl phosphate (CP) to the N(epsilon) atom of ornithine (ORN) to produce L-citrulline. This is Ornithine carbamoyltransferase, catabolic (arcB) from Bacillus cereus (strain ATCC 14579 / DSM 31 / CCUG 7414 / JCM 2152 / NBRC 15305 / NCIMB 9373 / NCTC 2599 / NRRL B-3711).